Here is a 292-residue protein sequence, read N- to C-terminus: Glycine--tRNA ligase alpha subunit (292 aa).

It belongs to the class-II aminoacyl-tRNA synthetase family. Tetramer of two alpha and two beta subunits.

The protein localises to the cytoplasm. It catalyses the reaction tRNA(Gly) + glycine + ATP = glycyl-tRNA(Gly) + AMP + diphosphate. This is Glycine--tRNA ligase alpha subunit from Pelotomaculum thermopropionicum (strain DSM 13744 / JCM 10971 / SI).